Reading from the N-terminus, the 367-residue chain is MAHAELATEQTLLREIGRTERNRRHIRGWLAVVLFALFALVLVGGATRLTESGLSITEWKPVHGVIPPLSAQEWEEEFRLYQRIPQYEQINKGMTVDDFKTIFWWEWAHRLLARGIGVIFALPLFFFWVTGRVERRLRLPLLAILALGGLQGFIGWWMVSSGLAERTAVSQYRLATHLTIACVIFAACMWIYRGLCPHSDDAPPTKASQKMAAVIAIFSLFQIYLGAIVAGLDAGLSYNTWPLMDGAIVPGGLFVQQPAWINLFENPKTVQFVHRLGAYLLLALVLWHMIAALRSAPETTHARRSVLLFALVVVQAAIGITTLLLQVPIGWGVLHQGGALVVLGFAIAHWRGFVGAYPKDTAIEVRA.

Helical transmembrane passes span 26–46 (IRGW…VGGA), 111–131 (LLAR…WVTG), 139–159 (LPLL…WWMV), 174–194 (LATH…IYRG), 212–232 (AAVI…VAGL), 272–292 (FVHR…MIAA), 305–325 (SVLL…TLLL), and 327–347 (VPIG…GFAI). His274 lines the heme pocket. His335 serves as a coordination point for heme.

This sequence belongs to the COX15/CtaA family. Type 2 subfamily. In terms of assembly, interacts with CtaB. The cofactor is heme b.

Its subcellular location is the cell membrane. The enzyme catalyses Fe(II)-heme o + 2 A + H2O = Fe(II)-heme a + 2 AH2. Its pathway is porphyrin-containing compound metabolism; heme A biosynthesis; heme A from heme O: step 1/1. Functionally, catalyzes the conversion of heme O to heme A by two successive hydroxylations of the methyl group at C8. The first hydroxylation forms heme I, the second hydroxylation results in an unstable dihydroxymethyl group, which spontaneously dehydrates, resulting in the formyl group of heme A. In Sinorhizobium medicae (strain WSM419) (Ensifer medicae), this protein is Heme A synthase.